Reading from the N-terminus, the 257-residue chain is Ribonuclease HII (257 aa).

The 186-residue stretch at 72–257 (TYIAGIDEVG…FAPIKDMIQK (186 aa)) folds into the RNase H type-2 domain. Residues Asp-78, Glu-79, and Asp-170 each contribute to the a divalent metal cation site.

This sequence belongs to the RNase HII family. Requires Mn(2+) as cofactor. Mg(2+) is required as a cofactor.

It localises to the cytoplasm. It carries out the reaction Endonucleolytic cleavage to 5'-phosphomonoester.. Its function is as follows. Endonuclease that specifically degrades the RNA of RNA-DNA hybrids. The sequence is that of Ribonuclease HII from Bacillus cereus (strain ZK / E33L).